The chain runs to 189 residues: ATP synthase subunit delta (189 aa).

The protein belongs to the ATPase delta chain family. F-type ATPases have 2 components, F(1) - the catalytic core - and F(0) - the membrane proton channel. F(1) has five subunits: alpha(3), beta(3), gamma(1), delta(1), epsilon(1). F(0) has three main subunits: a(1), b(2) and c(10-14). The alpha and beta chains form an alternating ring which encloses part of the gamma chain. F(1) is attached to F(0) by a central stalk formed by the gamma and epsilon chains, while a peripheral stalk is formed by the delta and b chains.

The protein resides in the cell inner membrane. In terms of biological role, f(1)F(0) ATP synthase produces ATP from ADP in the presence of a proton or sodium gradient. F-type ATPases consist of two structural domains, F(1) containing the extramembraneous catalytic core and F(0) containing the membrane proton channel, linked together by a central stalk and a peripheral stalk. During catalysis, ATP synthesis in the catalytic domain of F(1) is coupled via a rotary mechanism of the central stalk subunits to proton translocation. Functionally, this protein is part of the stalk that links CF(0) to CF(1). It either transmits conformational changes from CF(0) to CF(1) or is implicated in proton conduction. The polypeptide is ATP synthase subunit delta (Methylorubrum extorquens (strain PA1) (Methylobacterium extorquens)).